Consider the following 365-residue polypeptide: DNA replication and repair protein RecF (365 aa).

30–37 (GQNGSGKT) provides a ligand contact to ATP.

This sequence belongs to the RecF family.

It is found in the cytoplasm. Its function is as follows. The RecF protein is involved in DNA metabolism; it is required for DNA replication and normal SOS inducibility. RecF binds preferentially to single-stranded, linear DNA. It also seems to bind ATP. The polypeptide is DNA replication and repair protein RecF (Shewanella halifaxensis (strain HAW-EB4)).